The sequence spans 472 residues: Argininosuccinate lyase (472 aa).

This sequence belongs to the lyase 1 family. Argininosuccinate lyase subfamily.

Its subcellular location is the cytoplasm. It carries out the reaction 2-(N(omega)-L-arginino)succinate = fumarate + L-arginine. The protein operates within amino-acid biosynthesis; L-arginine biosynthesis; L-arginine from L-ornithine and carbamoyl phosphate: step 3/3. This is Argininosuccinate lyase from Rhodococcus opacus (strain B4).